We begin with the raw amino-acid sequence, 97 residues long: Large ribosomal subunit protein eL21 (97 aa).

The segment covering 1–12 has biased composition (polar residues); it reads MPSSNGPRQATR. The tract at residues 1-35 is disordered; that stretch reads MPSSNGPRQATRNKLKNDARERGTSPPQRSIEEYD.

Belongs to the eukaryotic ribosomal protein eL21 family.

In Natronomonas pharaonis (strain ATCC 35678 / DSM 2160 / CIP 103997 / JCM 8858 / NBRC 14720 / NCIMB 2260 / Gabara) (Halobacterium pharaonis), this protein is Large ribosomal subunit protein eL21.